Here is an 864-residue protein sequence, read N- to C-terminus: Leucine--tRNA ligase (864 aa).

A 'HIGH' region motif is present at residues 42–52; it reads PYPSGKLHMGH. The 'KMSKS' region signature appears at 624-628; the sequence is KMSKS. Lysine 627 lines the ATP pocket.

The protein belongs to the class-I aminoacyl-tRNA synthetase family.

The protein resides in the cytoplasm. It catalyses the reaction tRNA(Leu) + L-leucine + ATP = L-leucyl-tRNA(Leu) + AMP + diphosphate. This chain is Leucine--tRNA ligase, found in Burkholderia cenocepacia (strain HI2424).